The primary structure comprises 314 residues: MIEIEKPKIETVEISDDAKFGKFVVEPLERGYGTTLGNSLRRILLSSLPGAAVTSIQIDGVLHEFSTIEGVVEDVTTIILHIKKLALKIYSDEEKTLEIDVQGEGTVTAADITHDSDVEILNPDLHIATLGENASFRVRLTAQRGRGYTPADSNKRDDQPIGVIPIDSIFTPVSRLSYQVENTRVGQVANYDKLTLDVWTDGSTGPKEAIALGSKILTEHLNIFVGLTDEAQHAEIMVEKEEDQKEKVLEMTIEELDLSVRSYNCLKRAGINTVQELANKTEEDMMKVRNLGRKSLEEVKAKLEELGLGLRKDD.

Positions M1–T228 are alpha N-terminal domain (alpha-NTD). The interval E246 to D314 is alpha C-terminal domain (alpha-CTD).

The protein belongs to the RNA polymerase alpha chain family. In terms of assembly, homodimer. The RNAP catalytic core consists of 2 alpha, 1 beta, 1 beta' and 1 omega subunit. When a sigma factor is associated with the core the holoenzyme is formed, which can initiate transcription.

The catalysed reaction is RNA(n) + a ribonucleoside 5'-triphosphate = RNA(n+1) + diphosphate. DNA-dependent RNA polymerase catalyzes the transcription of DNA into RNA using the four ribonucleoside triphosphates as substrates. The protein is DNA-directed RNA polymerase subunit alpha of Bacillus velezensis (strain DSM 23117 / BGSC 10A6 / LMG 26770 / FZB42) (Bacillus amyloliquefaciens subsp. plantarum).